Consider the following 635-residue polypeptide: Moesin/ezrin/radixin homolog 2 (635 aa).

The FERM domain occupies Leu12–Arg305.

As to quaternary structure, interacts with Moe and arm at the adherens junction. Forms a complex with Kibra and Ex. Interacts (via FERM domain) with Sav (via FBM motif). Interacts with Schip1. As to expression, expressed predominantly in the germline. Expressed in the developing oocyte from stage 6 to the end of oogenesis and in the apical ends of follical cells from stage 10. Ubiquitous expression throughout embryogenesis with enhanced expression in mesoderm of early embryos and midgut of late embryos. In embryonic CNS, expression is seen in neuropil and developing brain and is enhanced in neuronal cell bodies. In embryonic PNS, expression is seen within the cell body. In third instar larvae, expression is uniform in the eye imaginal disk and is enhanced at the morphogenetic furrow. In pupal eyes, expression is seen in the cytoplasm of secondary and tertiary pigment cells, bristle precursor cells and rhabdomeres.

It is found in the cell junction. It localises to the adherens junction. The protein localises to the cell membrane. The protein resides in the cytoplasm. Its subcellular location is the cytoskeleton. It is found in the apical cell membrane. It localises to the cell projection. The protein localises to the rhabdomere. Functionally, regulator of the Hippo/SWH (Sav/Wts/Hpo) signaling pathway, a signaling pathway that plays a pivotal role in organ size control and tumor suppression by restricting proliferation and promoting apoptosis. The core of this pathway is composed of a kinase cascade wherein Hippo (Hpo), in complex with its regulatory protein Salvador (Sav), phosphorylates and activates Warts (Wts) in complex with its regulatory protein Mats, which in turn phosphorylates and inactivates the Yorkie (Yki) oncoprotein. Mer acts synergistically along with Ex and Kibra to regulate the Hippo signaling pathway. The protein is Moesin/ezrin/radixin homolog 2 (Mer) of Drosophila melanogaster (Fruit fly).